The chain runs to 153 residues: Endoribonuclease YbeY (153 aa).

The Zn(2+) site is built by histidine 118, histidine 122, and histidine 128.

Belongs to the endoribonuclease YbeY family. Zn(2+) serves as cofactor.

It is found in the cytoplasm. Its function is as follows. Single strand-specific metallo-endoribonuclease involved in late-stage 70S ribosome quality control and in maturation of the 3' terminus of the 16S rRNA. In Clostridioides difficile (strain 630) (Peptoclostridium difficile), this protein is Endoribonuclease YbeY.